Here is a 4115-residue protein sequence, read N- to C-terminus: Transcription-associated protein 1 (4115 aa).

Residues 1–11 (MDPSIPSTSHR) are compositionally biased toward polar residues. 2 disordered regions span residues 1 to 21 (MDPS…GVQP) and 543 to 563 (ESEQ…KKTS). Positions 544 to 563 (SEQKRNELPTPTKEHTKKTS) are enriched in basic and acidic residues. TPR repeat units follow at residues 1341–1374 (LDGL…LLDL) and 1820–1853 (QDYD…EVIP). A disordered region spans residues 2678-2701 (LEEPEPMEVDQPKNAPAEEPKDNK). The region spanning 2808 to 3421 (LIEFISSKHE…SNGASKVSKS (614 aa)) is the FAT domain. The TPR 3 repeat unit spans residues 2855 to 2888 (IETLESLGALYKELAEFDQYSAIWERRSVFPETM). Residues 3740 to 4100 (EPYFEIVMRG…CNSLIIRAKD (361 aa)) enclose the PI3K/PI4K catalytic domain. A G-loop region spans residues 3746–3752 (VMRGGQV). The interval 3959 to 3967 (NLSPMTPHQ) is catalytic loop. The tract at residues 3979–4006 (NPFYRFELGTGQLMDIEHFAHEVPFRLT) is activation loop. An FATC domain is found at 4083-4115 (DAKVKKDDCNSLIIRAKDSDNLSRMPPTYHAWF).

Belongs to the PI3/PI4-kinase family. TRA1 subfamily.

The protein resides in the nucleus. Influences germ cell fate in hermaphrodites. Acts downstream of tra-2 and tra-3 and through the Tip60 histone acetyltransferase complex to regulate germ cell fate decisions. Required for spermatogenesis and embryonic development. Acts with tra-2 to promote expression of fog-3 and control male tail development. Involved in the negative regulation of vulval development. This chain is Transcription-associated protein 1, found in Caenorhabditis briggsae.